The chain runs to 62 residues: Rubredoxin-2 (62 aa).

The Rubredoxin-like domain maps to 7–58; sequence MWRCQMVNCGYVYDPDRGDKRRKVPAGTKFEDLPEDWRCPVCGAGKKSFRRL. Positions 10, 15, 45, and 48 each coordinate Fe cation.

The protein belongs to the rubredoxin family. Monomer. The cofactor is Fe(3+).

Rubredoxin is a small nonheme, iron protein lacking acid-labile sulfide. Its single Fe, chelated to 4 Cys, functions as an electron acceptor and may also stabilize the conformation of the molecule. This chain is Rubredoxin-2 (rd2), found in Desulfovibrio desulfuricans (strain ATCC 27774 / DSM 6949 / MB).